Here is a 367-residue protein sequence, read N- to C-terminus: Flagellar P-ring protein (367 aa).

An N-terminal signal peptide occupies residues 1 to 22 (MRRMLVIRWILAIHLIATQVFA).

The protein belongs to the FlgI family. As to quaternary structure, the basal body constitutes a major portion of the flagellar organelle and consists of four rings (L,P,S, and M) mounted on a central rod.

The protein resides in the periplasm. It is found in the bacterial flagellum basal body. Functionally, assembles around the rod to form the L-ring and probably protects the motor/basal body from shearing forces during rotation. The sequence is that of Flagellar P-ring protein from Legionella pneumophila (strain Corby).